Reading from the N-terminus, the 246-residue chain is DNA repair protein RecO (246 aa).

It belongs to the RecO family.

Functionally, involved in DNA repair and RecF pathway recombination. The sequence is that of DNA repair protein RecO from Bifidobacterium adolescentis (strain ATCC 15703 / DSM 20083 / NCTC 11814 / E194a).